The primary structure comprises 51 residues: Large ribosomal subunit protein eL39 (51 aa).

Belongs to the eukaryotic ribosomal protein eL39 family.

The polypeptide is Large ribosomal subunit protein eL39 (RpL39) (Plutella xylostella (Diamondback moth)).